The sequence spans 160 residues: Protein cornichon homolog 2 (160 aa).

Residues 1 to 10 (MAFTFAAFCY) are Cytoplasmic-facing. Residues 11 to 31 (MLTLVLCAALIFFVIWQIIAF) traverse the membrane as a helical segment. Over 32–72 (DELRTDFKNPIDQSNPTRARERILNIERICNLLRRLVVPEY) the chain is Lumenal. The helical transmembrane segment at 73-93 (SIHGLFCLMFMCAGEWVTLGL) threads the bilayer. The Cytoplasmic segment spans residues 94-138 (NIPLLLYHLWRFFHRPADGSEVMYDPVSVMNADILNYCQKESWCK). The chain crosses the membrane as a helical span at residues 139 to 159 (LGFYLLSFFYYLYSMVYALVS). Position 160 (F160) is a topological domain, lumenal.

Belongs to the cornichon family.

It is found in the membrane. In terms of biological role, regulates the trafficking and gating properties of AMPA-selective glutamate receptors (AMPARs). This chain is Protein cornichon homolog 2 (cnih2), found in Danio rerio (Zebrafish).